Consider the following 335-residue polypeptide: Fructose-1,6-bisphosphatase class 1 (335 aa).

Residues glutamate 92, aspartate 114, leucine 116, and aspartate 117 each contribute to the Mg(2+) site. Residues 117–120, asparagine 209, and lysine 275 contribute to the substrate site; that span reads DGSS. Glutamate 281 contacts Mg(2+).

This sequence belongs to the FBPase class 1 family. In terms of assembly, homotetramer. It depends on Mg(2+) as a cofactor.

The protein localises to the cytoplasm. It carries out the reaction beta-D-fructose 1,6-bisphosphate + H2O = beta-D-fructose 6-phosphate + phosphate. It functions in the pathway carbohydrate biosynthesis; gluconeogenesis. In Delftia acidovorans (strain DSM 14801 / SPH-1), this protein is Fructose-1,6-bisphosphatase class 1.